The primary structure comprises 440 residues: Enolase (440 aa).

A (2R)-2-phosphoglycerate-binding site is contributed by Gln163. Catalysis depends on Glu205, which acts as the Proton donor. Mg(2+) is bound by residues Asp242, Glu288, and Asp315. 4 residues coordinate (2R)-2-phosphoglycerate: Lys340, Arg369, Ser370, and Lys391. Lys340 (proton acceptor) is an active-site residue.

The protein belongs to the enolase family. It depends on Mg(2+) as a cofactor.

The protein resides in the cytoplasm. The protein localises to the secreted. Its subcellular location is the cell surface. It carries out the reaction (2R)-2-phosphoglycerate = phosphoenolpyruvate + H2O. It functions in the pathway carbohydrate degradation; glycolysis; pyruvate from D-glyceraldehyde 3-phosphate: step 4/5. Its function is as follows. Catalyzes the reversible conversion of 2-phosphoglycerate (2-PG) into phosphoenolpyruvate (PEP). It is essential for the degradation of carbohydrates via glycolysis. In Limosilactobacillus fermentum (strain NBRC 3956 / LMG 18251) (Lactobacillus fermentum), this protein is Enolase.